The sequence spans 415 residues: Histidine--tRNA ligase (415 aa).

This sequence belongs to the class-II aminoacyl-tRNA synthetase family. In terms of assembly, homodimer.

Its subcellular location is the cytoplasm. The catalysed reaction is tRNA(His) + L-histidine + ATP = L-histidyl-tRNA(His) + AMP + diphosphate + H(+). The polypeptide is Histidine--tRNA ligase (Rhodospirillum rubrum (strain ATCC 11170 / ATH 1.1.1 / DSM 467 / LMG 4362 / NCIMB 8255 / S1)).